The primary structure comprises 362 residues: E3 ubiquitin-protein ligase TM129 (362 aa).

At 1–6 (MESPAV) the chain is on the lumenal side. A helical membrane pass occupies residues 7-27 (TFTLAYVVFSVCFVFTPNEFH). At 28-56 (SAGITVQNLLSGWLGSEDVAFVHYHIRRS) the chain is on the cytoplasmic side. A helical transmembrane segment spans residues 57–77 (SATLLAHSLLPMGYFIGMCFA). Topologically, residues 78–94 (APEKELYNVHKAADGWK) are lumenal. Residues 95–115 (VFVLMAVLLPIATSILAFYWS) traverse the membrane as a helical segment. Residues 116–362 (QKRWSNHPLA…FCIVDVCIVR (247 aa)) are Cytoplasmic-facing. The segment at 285 to 350 (CIGCMQTNAN…SSQVPCPTCR (66 aa)) adopts an RING-type; degenerate zinc-finger fold.

Belongs to the TMEM129 family. In terms of assembly, integral component of ER-resident dislocation complexes.

It localises to the endoplasmic reticulum membrane. The enzyme catalyses S-ubiquitinyl-[E2 ubiquitin-conjugating enzyme]-L-cysteine + [acceptor protein]-L-lysine = [E2 ubiquitin-conjugating enzyme]-L-cysteine + N(6)-ubiquitinyl-[acceptor protein]-L-lysine.. Its pathway is protein modification; protein ubiquitination. Its function is as follows. E3 ubiquitin-protein ligase involved in ER-associated protein degradation, preferentially associates with the E2 enzyme UBE2J2. This is E3 ubiquitin-protein ligase TM129 (tmem129) from Xenopus laevis (African clawed frog).